The chain runs to 206 residues: Ras-related protein ralB-B (206 aa).

A GTP-binding site is contributed by 21 to 28 (GSGGVGKS). Positions 43 to 51 (YEPTKADSY) match the Effector region motif. Residues 68-72 (DTAGQ) and 128-131 (NKSD) contribute to the GTP site. The segment covering 180–189 (KMSENKDKNG) has biased composition (basic and acidic residues). The tract at residues 180–206 (KMSENKDKNGKKSGKSKKGFKQRCCLL) is disordered. Basic residues predominate over residues 190 to 200 (KKSGKSKKGFK). Position 203 is a cysteine methyl ester (cysteine 203). Cysteine 203 carries S-geranylgeranyl cysteine lipidation. Residues 204-206 (CLL) constitute a propeptide, removed in mature form.

The protein belongs to the small GTPase superfamily. Ras family. Interacts with ralbp1 and rap1gds1.

It localises to the cell membrane. The protein resides in the midbody. It carries out the reaction GTP + H2O = GDP + phosphate + H(+). In terms of biological role, multifunctional GTPase involved in a variety of cellular processes including gene expression, cell migration, cell proliferation, oncogenic transformation and membrane trafficking. Accomplishes its multiple functions by interacting with distinct downstream effectors. Acts as a GTP sensor for GTP-dependent exocytosis of dense core vesicles. Required both to stabilize the assembly of the exocyst complex and to localize functional exocyst complexes to the leading edge of migrating cells. Required for suppression of apoptosis. In late stages of cytokinesis, upon completion of the bridge formation between dividing cells, mediates exocyst recruitment to the midbody to drive abscission. Regulates the actin cytoskeleton to play a role in gastrulation or neurulation. During the cleavage stages, the GTP-bound form induces a cortical reaction that affects the localization of pigment granules. Activated by the FGF pathway via ras and ral-GDS, but independently of raf. Directs ralbp1 to the plasma membrane. Involved in ligand-dependent receptor mediated endocytosis of the EGF and insulin receptors. The sequence is that of Ras-related protein ralB-B (ralb-b) from Xenopus laevis (African clawed frog).